We begin with the raw amino-acid sequence, 333 residues long: Atrochrysone carboxyl ACP thioesterase (333 aa).

Histidine 104, histidine 106, aspartate 108, and histidine 109 together coordinate Zn(2+). Residue aspartate 108 is the Proton donor/acceptor of the active site.

The protein belongs to the metallo-beta-lactamase superfamily. Zn(2+) serves as cofactor.

The enzyme catalyses atrochrysone carboxyl-[ACP] + H2O = atrochrysone carboxylate + holo-[ACP] + H(+). It participates in pigment biosynthesis. Atrochrysone carboxyl ACP thioesterase; part of the gene cluster that mediates the biosynthesis of the bianthraquinone cladofulvin, a conidial pigment not required for virulence but that plays a role in fitness and resistance to environmental stresses including UV light and low-temperature stress. The pathway begins with the synthesis of atrochrysone thioester by the polyketide synthase (PKS) claG. The atrochrysone carboxyl ACP thioesterase claF then breaks the thioester bond and releases the atrochrysone carboxylic acid from claG. This compound is decarboxylated by claH to yield emodin, which is further converted to chrysophanol hydroquinone by the reductase claC and the dehydratase claB. The cytochrome P450 monooxygenase claM then catalyzes the dimerization of nataloe-emodin to cladofulvin. The sequence is that of Atrochrysone carboxyl ACP thioesterase from Passalora fulva (Tomato leaf mold).